Reading from the N-terminus, the 230-residue chain is Vacuole-localized protein 4 (230 aa).

The first 19 residues, 1 to 19, serve as a signal peptide directing secretion; the sequence is MRVSSAIFTIASGIAAVSA.

It is found in the vacuole. In terms of biological role, vacuolar protein required for aerial conidiation and conidial maturation. Also involved in blastospore production and cell cycle. Plays a vital role in the secretion of Pr1 proteases for cuticular penetration and hence contributes significantly to host infection and virulence. This Beauveria bassiana (strain ARSEF 2860) (White muscardine disease fungus) protein is Vacuole-localized protein 4.